The chain runs to 309 residues: Aspartate carbamoyltransferase catalytic subunit (309 aa).

Arg55 and Thr56 together coordinate carbamoyl phosphate. Lys85 is a binding site for L-aspartate. 3 residues coordinate carbamoyl phosphate: Arg106, His135, and Gln138. Residues Arg168 and Arg230 each contribute to the L-aspartate site. Positions 268 and 269 each coordinate carbamoyl phosphate.

Belongs to the aspartate/ornithine carbamoyltransferase superfamily. ATCase family. In terms of assembly, heterododecamer (2C3:3R2) of six catalytic PyrB chains organized as two trimers (C3), and six regulatory PyrI chains organized as three dimers (R2).

It catalyses the reaction carbamoyl phosphate + L-aspartate = N-carbamoyl-L-aspartate + phosphate + H(+). It participates in pyrimidine metabolism; UMP biosynthesis via de novo pathway; (S)-dihydroorotate from bicarbonate: step 2/3. Functionally, catalyzes the condensation of carbamoyl phosphate and aspartate to form carbamoyl aspartate and inorganic phosphate, the committed step in the de novo pyrimidine nucleotide biosynthesis pathway. This is Aspartate carbamoyltransferase catalytic subunit from Vibrio cholerae serotype O1 (strain ATCC 39315 / El Tor Inaba N16961).